Consider the following 459-residue polypeptide: DIMBOA UDP-glucosyltransferase BX8 (459 aa).

His19 acts as the Proton acceptor in catalysis. His19 contributes to the an anthocyanidin binding site. The active-site Charge relay is the Asp119. Residues Thr141, Ala340, Gln342, His357, Trp360, Asn361, Ser362, and Glu365 each contribute to the UDP-alpha-D-glucose site. Gly380 serves as a coordination point for an anthocyanidin. Residues Asp381 and Gln382 each coordinate UDP-alpha-D-glucose.

The protein belongs to the UDP-glycosyltransferase family. Mg(2+) serves as cofactor. It depends on Ca(2+) as a cofactor. Expressed at the same levels in roots and shoots.

It carries out the reaction DIMBOA + UDP-alpha-D-glucose = DIMBOA beta-D-glucoside + UDP + H(+). The catalysed reaction is DIBOA + UDP-alpha-D-glucose = DIBOA beta-D-glucoside + UDP + H(+). Glucosyltransferase involved in the last step of benzoxazinoid glucoside biosynthesis. Catalyzes the glucosylation of hydroxamic acids utilizing UDP-glucose as glucose doner, reducing the toxicity of these natural insecticides for storage. Can use DIMBOA and DIBOA as substrates, HMBOA (2-hydroxy-7-methoxy-2H-1,4-benzoxazin-3(4H)-one) and HBOA (2-hydroxy-2H-1,4-benzoxazin-3(4H)-one) with a lower efficiency, but not indole acetic acid or quercitin. The protein is DIMBOA UDP-glucosyltransferase BX8 (Bx8) of Zea mays (Maize).